Reading from the N-terminus, the 702-residue chain is Elongation factor G (702 aa).

The tr-type G domain occupies Ser8–Thr290. Residues Ala17 to Thr24, Asp88 to His92, and Asn142 to Asp145 contribute to the GTP site.

Belongs to the TRAFAC class translation factor GTPase superfamily. Classic translation factor GTPase family. EF-G/EF-2 subfamily.

It is found in the cytoplasm. Functionally, catalyzes the GTP-dependent ribosomal translocation step during translation elongation. During this step, the ribosome changes from the pre-translocational (PRE) to the post-translocational (POST) state as the newly formed A-site-bound peptidyl-tRNA and P-site-bound deacylated tRNA move to the P and E sites, respectively. Catalyzes the coordinated movement of the two tRNA molecules, the mRNA and conformational changes in the ribosome. The protein is Elongation factor G of Edwardsiella ictaluri (strain 93-146).